The following is a 130-amino-acid chain: Riboflavin kinase (130 aa).

A CDP-binding site is contributed by 10-15 (GFGEGK). Thr39 and Asn41 together coordinate Mg(2+). FMN contacts are provided by Thr96 and Glu104. 109–112 (VNLR) contacts CDP.

The protein belongs to the archaeal riboflavin kinase family. Mg(2+) serves as cofactor.

It catalyses the reaction riboflavin + CTP = CDP + FMN + H(+). Its pathway is cofactor biosynthesis; FMN biosynthesis; FMN from riboflavin (CTP route): step 1/1. Its function is as follows. Catalyzes the CTP-dependent phosphorylation of riboflavin (vitamin B2) to form flavin mononucleotide (FMN). The polypeptide is Riboflavin kinase (Methanococcus vannielii (strain ATCC 35089 / DSM 1224 / JCM 13029 / OCM 148 / SB)).